The chain runs to 98 residues: HssA/B-like protein 36 (98 aa).

Positions 1 to 29 are disordered; it reads MTLFSSISSISNPMTSSKSSISSFGSGTS.

This sequence belongs to the hssA/B family.

The sequence is that of HssA/B-like protein 36 (hssl36) from Dictyostelium discoideum (Social amoeba).